An 81-amino-acid polypeptide reads, in one-letter code: MSNQFSEAQHQLDALGLRCPEPVMMVRKSVRKMAQGETLLIIADDPATTRDIPSFCEFMDHKLLASQTETTPYQYLIQKGL.

Catalysis depends on Cys-19, which acts as the Cysteine persulfide intermediate.

This sequence belongs to the sulfur carrier protein TusA family.

It localises to the cytoplasm. In terms of biological role, sulfur carrier protein which probably makes part of a sulfur-relay system. The protein is Sulfur carrier protein TusA of Shewanella woodyi (strain ATCC 51908 / MS32).